Reading from the N-terminus, the 301-residue chain is Small ribosomal subunit protein uS3 (301 aa).

A KH type-2 domain is found at 39-107 (VREYLKAKLK…PVAVNIEEVR (69 aa)). The tract at residues 211-301 (GESPGAKLDA…AAAADGTKTE (91 aa)) is disordered. Basic and acidic residues predominate over residues 224 to 244 (DEERKPRGPRRDARPGSDRPA). Residues 245 to 257 (PRGARAPRAPAGG) show a composition bias toward low complexity.

It belongs to the universal ribosomal protein uS3 family. As to quaternary structure, part of the 30S ribosomal subunit. Forms a tight complex with proteins S10 and S14.

In terms of biological role, binds the lower part of the 30S subunit head. Binds mRNA in the 70S ribosome, positioning it for translation. The sequence is that of Small ribosomal subunit protein uS3 from Polaromonas sp. (strain JS666 / ATCC BAA-500).